The chain runs to 234 residues: Ribosome-inactivating protein lychnin (234 aa).

Residues Cys32 and Cys115 are joined by a disulfide bond. Residue Glu170 is part of the active site.

Monomer.

It carries out the reaction Endohydrolysis of the N-glycosidic bond at one specific adenosine on the 28S rRNA.. Its function is as follows. Ribosome-inactivating protein of type 1, inhibits protein synthesis in animal cells. Inhibits cell-free translation in rabbit reticulocyte lysate system with an IC(50) of 0.17 nM. The chain is Ribosome-inactivating protein lychnin from Silene chalcedonica (Maltese-cross).